A 211-amino-acid polypeptide reads, in one-letter code: Arginine exporter protein ArgO (211 aa).

The next 6 membrane-spanning stretches (helical) occupy residues 1-21 (MISY…PLGP), 37-57 (LMIA…GIFG), 68-88 (LLAL…FGAL), 111-131 (IIAT…DTFV), 147-167 (WFAL…ALLA), and 179-199 (AQRI…FQLA).

Belongs to the LysE/ArgO transporter (TC 2.A.75) family.

The protein localises to the cell inner membrane. It catalyses the reaction L-arginine(in) = L-arginine(out). In terms of biological role, involved in the export of arginine. Important to control the intracellular level of arginine and the correct balance between arginine and lysine. This Salmonella newport (strain SL254) protein is Arginine exporter protein ArgO.